Reading from the N-terminus, the 2531-residue chain is Neurogenic locus notch homolog protein 1 (2531 aa).

The first 18 residues, M1–A18, serve as a signal peptide directing secretion. Residues A19–H1725 lie on the Extracellular side of the membrane. EGF-like domains are found at residues R20 to Q58, D59 to L99, L102 to Q139, and Q140 to R176. 33 cysteine pairs are disulfide-bonded: C24–C37, C31–C46, C48–C57, C63–C74, C68–C87, C89–C98, C106–C117, C111–C127, C129–C138, C144–C155, C149–C164, C166–C175, C182–C195, C189–C204, C206–C215, C222–C233, C227–C243, C245–C254, C261–C272, C266–C281, C283–C292, C299–C312, C306–C321, C323–C332, C339–C350, C344–C359, C361–C370, C376–C387, C381–C398, C400–C409, C416–C429, C423–C438, and C440–C449. Residue N41 is glycosylated (N-linked (GlcNAc...) asparagine). O-linked (Glc...) serine glycosylation is present at S65. Residue T73 is glycosylated (O-linked (Fuc...) threonine). An O-linked (Fuc...) threonine glycan is attached at T116. O-linked (Glc...) serine glycosylation occurs at S146. One can recognise an EGF-like 5; calcium-binding domain in the interval D178–E216. A glycan (O-linked (Fuc...) threonine) is linked at T194. Residues P218 to E255 form the EGF-like 6 domain. Residue T232 is glycosylated (O-linked (Fuc...) threonine; alternate). T232 carries an O-linked (GalNAc...) threonine; alternate glycan. The EGF-like 7; calcium-binding domain maps to N257 to T293. The region spanning D295–S333 is the EGF-like 8; calcium-binding domain. T311 is a glycosylation site (O-linked (Fuc...) threonine). The EGF-like 9; calcium-binding domain maps to N335 to H371. The O-linked (Glc...) serine glycan is linked to S341. T349 carries O-linked (Fuc...) threonine glycosylation. Positions L372–S410 constitute an EGF-like 10 domain. O-linked (Glc...) serine glycosylation occurs at S378. Positions D412–E450 constitute an EGF-like 11; calcium-binding domain. The interval A420–N421 is interaction with DLL4. Residues T432 and S435 each contribute to the Ca(2+) site. S435 carries an O-linked (Glc...) serine glycan. Residues R448–D452 are interaction with DLL4. Residues D452, V453, and E455 each coordinate Ca(2+). The region spanning D452–E488 is the EGF-like 12; calcium-binding domain. Intrachain disulfides connect C456-C467, C461-C476, and C478-C487. The O-linked (Glc...) serine glycan is linked to S458. O-linked (Fuc...) threonine glycosylation occurs at T466. 2 residues coordinate Ca(2+): D469 and Q470. Residues N490, T491, and E493 each coordinate Ca(2+). The region spanning N490–Q526 is the EGF-like 13; calcium-binding domain. Cystine bridges form between C494–C505, C499–C514, C516–C525, C532–C543, C537–C552, C554–C563, C570–C580, C575–C589, C591–C600, C607–C618, C612–C627, C629–C638, C645–C655, C650–C664, C666–C675, C682–C693, C687–C702, C704–C713, C720–C730, C725–C739, C741–C750, C757–C768, C762–C777, C779–C788, C795–C806, C800–C815, C817–C826, C833–C844, C838–C855, C857–C866, C873–C884, C878–C893, C895–C904, C911–C922, C916–C931, C933–C942, C949–C960, C954–C969, C971–C980, C987–C998, C992–C1007, C1009–C1018, C1025–C1036, C1030–C1045, C1047–C1056, C1063–C1074, C1068–C1083, C1085–C1094, C1101–C1122, C1116–C1131, C1133–C1142, C1149–C1160, C1154–C1169, C1171–C1180, C1187–C1198, C1192–C1207, C1209–C1218, C1225–C1244, C1238–C1253, C1255–C1264, C1271–C1284, C1276–C1293, C1295–C1304, C1311–C1322, C1316–C1334, C1336–C1345, C1352–C1363, C1357–C1372, C1374–C1383, C1391–C1403, C1397–C1414, C1416–C1425, C1449–C1472, C1454–C1467, and C1463–C1479. S496 carries an O-linked (Glc...) serine glycan. Residues D507 and K508 each coordinate Ca(2+). The EGF-like 14; calcium-binding domain maps to D528–E564. S534 is a glycosylation site (O-linked (Glc...) serine). An EGF-like 15; calcium-binding domain is found at D566–E601. Positions N603–E639 constitute an EGF-like 16; calcium-binding domain. The O-linked (Glc...) serine glycan is linked to S609. The O-linked (Fuc...) threonine glycan is linked to T617. The EGF-like 17; calcium-binding domain maps to N641–N676. A glycan (O-linked (Glc...) serine) is linked at S647. The region spanning N678–L714 is the EGF-like 18; calcium-binding domain. T692 carries O-linked (Fuc...) threonine glycosylation. Residues E716–D751 form the EGF-like 19; calcium-binding domain. O-linked (Glc...) serine glycosylation occurs at S722. An EGF-like 20; calcium-binding domain is found at N753–Q789. An O-linked (Glc...) serine glycan is attached at S759. T767 is a glycosylation site (O-linked (Fuc...) threonine). O-linked (GlcNAc) serine glycosylation occurs at S784. Residues N791–E827 enclose the EGF-like 21; calcium-binding domain. S797 is a glycosylation site (O-linked (Glc...) serine). A glycan (O-linked (Fuc...) threonine) is linked at T805. An EGF-like 22 domain is found at V829–E867. The EGF-like 23; calcium-binding domain occupies D869 to E905. The N-linked (GlcNAc...) asparagine glycan is linked to N888. Residue T900 is glycosylated (O-linked (GlcNAc) threonine). Residues D907–E943 enclose the EGF-like 24 domain. A glycan (O-linked (Fuc) serine) is linked at S921. Residues D945–E981 form the EGF-like 25; calcium-binding domain. S951 carries an O-linked (Glc...) serine glycan. A glycan (N-linked (GlcNAc...) asparagine) is linked at N959. Residues N983–Q1019 form the EGF-like 26 domain. O-linked (Fuc...) threonine glycosylation occurs at T997. An EGF-like 27; calcium-binding domain is found at D1021 to Q1057. S1027 carries an O-linked (Glc...) serine glycan. O-linked (Fuc...) threonine glycosylation occurs at T1035. 2 EGF-like domains span residues L1059–D1095 and L1097–E1143. Residue S1065 is glycosylated (O-linked (Glc...) serine). Residues E1145–S1181 form the EGF-like 30; calcium-binding domain. An O-linked (Fuc...) threonine glycan is attached at T1159. The N-linked (GlcNAc...) asparagine glycan is linked to N1179. The EGF-like 31; calcium-binding domain maps to E1183–E1219. O-linked (Glc...) serine glycosylation is present at S1189. The O-linked (Fuc...) threonine glycan is linked to T1197. An EGF-like 32; calcium-binding domain is found at N1221 to E1265. N1241 carries N-linked (GlcNAc...) asparagine glycosylation. EGF-like domains follow at residues D1267 to E1305, V1307 to E1346, D1348 to Q1384, and A1387 to H1426. S1273 carries an O-linked (Glc...) serine glycan. T1362 is a glycosylation site (O-linked (Fuc...) threonine). T1379 carries O-linked (GlcNAc...) threonine glycosylation. A glycan (O-linked (Fuc...) threonine; alternate) is linked at T1402. The O-linked (GalNAc...) threonine; alternate glycan is linked to T1402. LNR repeat units follow at residues C1449 to N1489, C1490 to L1531, and Y1532 to A1571. Residues D1457, N1460, D1475, and D1478 each coordinate Ca(2+). N-linked (GlcNAc...) asparagine glycosylation is present at N1489. 5 disulfide bridges follow: C1490–C1514, C1496–C1509, C1505–C1521, C1536–C1549, and C1545–C1561. N1587 carries N-linked (GlcNAc...) asparagine glycosylation. T1715 carries an O-linked (GalNAc...) threonine glycan. The segment at P1718–R1750 is interaction with PSEN1. Residues L1726–L1746 form a helical membrane-spanning segment. Residues S1747–K2531 are Cytoplasmic-facing. K1749 participates in a covalent cross-link: Glycyl lysine isopeptide (Lys-Gly) (interchain with G-Cter in ubiquitin). The disordered stretch occupies residues K1770–D1798. A Phosphothreonine modification is found at T1851. ANK repeat units lie at residues T1917–I1946, M1950–A1980, D1984–A2013, L2017–M2046, and K2050–I2079. An HIF1AN-binding region spans residues L1937–N1945. N1945 bears the (3S)-3-hydroxyasparagine; by HIF1AN mark. An HIF1AN-binding region spans residues L2004 to N2012. N2012 is subject to (3S)-3-hydroxyasparagine; by HIF1AN. 3 disordered regions span residues S2141–S2185, Q2382–V2428, and P2440–K2531. A compositionally biased stretch (low complexity) spans Q2382–S2395. Residues P2440 to L2478 show a composition bias toward polar residues. Positions P2488–S2503 are enriched in low complexity. Over residues N2504 to T2524 the composition is skewed to polar residues.

It belongs to the NOTCH family. Heterodimer of a C-terminal fragment N(TM) and an N-terminal fragment N(EC) which are probably linked by disulfide bonds. Interacts with DNER, DTX1, DTX2 and RBPJ/RBPSUH. Also interacts with MAML1, MAML2 and MAML3 which act as transcriptional coactivators for NOTCH1. Notch 1 intracellular domain interacts with SNW1; the interaction involves multimerized NOTCH1 NICD and is implicated in a formation of an intermediate preactivation complex which associates with DNA-bound CBF-1/RBPJ. The activated membrane-bound form interacts with AAK1 which promotes NOTCH1 stabilization. Forms a trimeric complex with FBXW7 and SGK1. Interacts with HIF1AN. HIF1AN negatively regulates the function of notch intracellular domain (NICD), accelerating myogenic differentiation. Interacts (via NICD) with SNAI1 (via zinc fingers); the interaction induces SNAI1 degradation via MDM2-mediated ubiquitination and inhibits SNAI1-induced cell invasion. Interacts (via NICD) with MDM2A. Interacts (via NICD) with BCL6; the interaction decreases MAML1 recruitment by NOTCH1 NICD on target genes DNA and inhibits NOTCH1 transactivation activity. Interacts with THBS4. Interacts (via the EGF-like repeat region) with CCN3 (via CTCK domain). Interacts (via EGF-like domains) with DLL4 (via N-terminal DSL and MNNL domains). Interacts with ZMIZ1. Interacts (via NICD domain) with MEGF10 (via the cytoplasmic domain). Interacts with DLL1 and JAG1. Interacts (via NICD domain) with PRAG1. Forms a complex with PRAG1, N1ICD and MAML1, in a MAML1-dependent manner. Interacts (via transmembrane region) with PSEN1; the interaction is direct. Interacts with ZFP64. Post-translationally, synthesized in the endoplasmic reticulum as an inactive form which is proteolytically cleaved by a furin-like convertase in the trans-Golgi network before it reaches the plasma membrane to yield an active, ligand-accessible form. Cleavage results in a C-terminal fragment N(TM) and a N-terminal fragment N(EC). Following ligand binding, it is cleaved by ADAM17 to yield a membrane-associated intermediate fragment called notch extracellular truncation (NEXT). Following endocytosis, this fragment is then cleaved by one of the catalytic subunits of gamma-secretase (PSEN1 or PSEN2) to release a Notch-derived peptide containing the intracellular domain (NICD) from the membrane. In terms of processing, phosphorylated. O-glycosylated on the EGF-like domains. O-glucosylated at Ser-435 by KDELC1 and KDELC2. Contains both O-linked fucose and O-linked glucose in the EGF-like domains 11, 12 and 13, which are interacting with the residues on DLL4. O-linked glycosylation by GALNT11 is involved in determination of left/right symmetry: glycosylation promotes activation of NOTCH1, possibly by promoting cleavage by ADAM17, modulating the balance between motile and immotile (sensory) cilia at the left-right organiser (LRO). MFNG-, RFNG- and LFNG-mediated modification of O-fucose residues at specific EGF-like domains results in inhibition of its activation by JAG1 and enhancement of its activation by DLL1 via an increased binding to DLL1. Post-translationally, ubiquitinated. Undergoes 'Lys-29'-linked polyubiquitination by ITCH; promotes the lysosomal degradation of non-activated internalized NOTCH1. Deubiquitination by USP12 is required for transport of internalized non-activated receptor from late endosomes to lysosomes for degradation. Monoubiquitination at Lys-1749 is required for activation by gamma-secretase cleavage, it promotes interaction with AAK1, which stabilizes it. Deubiquitination by EIF3F is necessary for nuclear import of activated Notch. In terms of processing, hydroxylated at Asn-1945 and Asn-2012 by HIF1AN. Hydroxylation reduces affinity for HI1AN and may thus indirectly modulate negative regulation of NICD. As to expression, expressed in the brain, kidney and spleen. Expressed in postnatal central nervous system (CNS) germinal zones and, in early postnatal life, within numerous cells throughout the CNS. Found in both subventricular and ventricular germinal zones.

It localises to the cell membrane. The protein localises to the late endosome membrane. The protein resides in the nucleus. Functions as a receptor for membrane-bound ligands Jagged-1 (JAG1), Jagged-2 (JAG2) and Delta-1 (DLL1) to regulate cell-fate determination. Upon ligand activation through the released notch intracellular domain (NICD) it forms a transcriptional activator complex with RBPJ/RBPSUH and activates genes of the enhancer of split locus. Affects the implementation of differentiation, proliferation and apoptotic programs. Involved in angiogenesis; negatively regulates endothelial cell proliferation and migration and angiogenic sprouting. Involved in the maturation of both CD4(+) and CD8(+) cells in the thymus. Important for follicular differentiation and possibly cell fate selection within the follicle. During cerebellar development, functions as a receptor for neuronal DNER and is involved in the differentiation of Bergmann glia. Represses neuronal and myogenic differentiation. May play an essential role in postimplantation development, probably in some aspect of cell specification and/or differentiation. May be involved in mesoderm development, somite formation and neurogenesis. May enhance HIF1A function by sequestering HIF1AN away from HIF1A. Required for the THBS4 function in regulating protective astrogenesis from the subventricular zone (SVZ) niche after injury. Involved in determination of left/right symmetry by modulating the balance between motile and immotile (sensory) cilia at the left-right organiser (LRO). In Rattus norvegicus (Rat), this protein is Neurogenic locus notch homolog protein 1 (Notch1).